The primary structure comprises 262 residues: Small ribosomal subunit protein eS4 (262 aa).

Residues 42–104 enclose the S4 RNA-binding domain; it reads LPLILILRNR…TNEDFRLLYD (63 aa).

This sequence belongs to the eukaryotic ribosomal protein eS4 family.

The protein localises to the cytoplasm. This Gossypium hirsutum (Upland cotton) protein is Small ribosomal subunit protein eS4 (RPS4).